The sequence spans 425 residues: Dihydroorotase (425 aa).

Positions 58 and 60 each coordinate Zn(2+). Substrate-binding positions include 60-62 (HFR) and Asn-92. 3 residues coordinate Zn(2+): Asp-150, His-177, and His-230. Asn-276 is a binding site for substrate. Asp-303 is a binding site for Zn(2+). The active site involves Asp-303. Substrate is bound by residues His-307 and 321–322 (FG).

It belongs to the metallo-dependent hydrolases superfamily. DHOase family. Class I DHOase subfamily. It depends on Zn(2+) as a cofactor.

The enzyme catalyses (S)-dihydroorotate + H2O = N-carbamoyl-L-aspartate + H(+). Its pathway is pyrimidine metabolism; UMP biosynthesis via de novo pathway; (S)-dihydroorotate from bicarbonate: step 3/3. Catalyzes the reversible cyclization of carbamoyl aspartate to dihydroorotate. The sequence is that of Dihydroorotase from Pediococcus pentosaceus (strain ATCC 25745 / CCUG 21536 / LMG 10740 / 183-1w).